Consider the following 140-residue polypeptide: Biopolymer transport protein exbD1 (140 aa).

The Cytoplasmic portion of the chain corresponds to 1 to 16 (MAFSSGNSGGPMADIN). The chain crosses the membrane as a helical span at residues 17 to 37 (VTPLVDVMLVLLIIFIITAPL). Residues 38–140 (MSHKVKVELP…GFVATKEKGQ (103 aa)) are Periplasmic-facing.

Belongs to the ExbD/TolR family. As to quaternary structure, the accessory proteins ExbB and ExbD seem to form a complex with TonB.

The protein localises to the cell inner membrane. In terms of biological role, involved in the TonB-dependent energy-dependent transport of various receptor-bound substrates. The sequence is that of Biopolymer transport protein exbD1 (exbD1) from Xanthomonas campestris pv. campestris (strain B100).